Reading from the N-terminus, the 730-residue chain is MSSVTWAPGNYPSTRRSDHVDTYQSASKGEVPVPDPYQWLEESTDEVDKWTTAQADLAQSYLDQNADIQKLAEKFRASRNYAKFSAPTLLDDGHWYWFYNRGLQSQSVLYRSKEPALPDFSKGDDNVGDVFFDPNVLAADGSAGMVLCKFSPDGKFFAYAVSHLGGDYSTIYVRSTSSPLSQASVAQGVDGRLSDEVKWFKFSTIIWTKDSKGFLYQRYPARERHEGTRSDRNAMMCYHKVGTTQEEDIIVYQDNEHPEWIYGADTSEDGKYLYLYQFKDTSKKNLLWVAELDEDGVKSGIHWRKVVNEYAADYNIITNHGSLVYIKTNLNAPQYKVITIDLSKDEPEIRDFIPEEKDAKLAQVNCANEEYFVAIYKRNVKDEIYLYSKAGVQLTRLAPDFVGAASIANRQKQTHFFLTLSGFNTPGTIARYDFTAPETQRFSILRTTKVNELDPDDFESTQVWYESKDGTKIPMFIVRHKSTKFDGTAAAIQYGYGGFATSADPFFSPIILTFLQTYGAIFAVPSIRGGGEFGEEWHKGGRRETKVNTFDDFIAAAQFLVKNKYAAPGKVAINGASNGGLLVMGSIVRAPEGTFGAAVPEGGVADLLKFHKFTGGQAWISEYGNPSIPEEFDYIYPLSPVHNVRTDKVMPATLITVNIGDGRVVPMHSFKFIATLQHNVPQNPHPLLIKIDKSWLGHGMGKPTDKNVKDAADKWGFIARALGLELKTVE.

The segment at 1 to 34 (MSSVTWAPGNYPSTRRSDHVDTYQSASKGEVPVP) is disordered. Catalysis depends on charge relay system residues Ser-577, Asp-661, and His-698.

Belongs to the peptidase S9A family. In terms of assembly, monomer.

It carries out the reaction Hydrolysis of Pro-|-Xaa &gt;&gt; Ala-|-Xaa in oligopeptides.. In terms of biological role, dual function macrocyclase-peptidase involved in the biosynthesis of the highly toxic amanitin toxin family of macrocycles. Cleaves peptide bonds on the C-terminal side of prolyl residues. The enzyme first removes 10 residues from the N-terminus of a 35-residue substrate. Conformational trapping of the 25 amino-acid peptide forces the enzyme to release this intermediate rather than proceed to macrocyclization. The enzyme rebinds the 25 amino-acid peptide in a different conformation and catalyzes macrocyclization of the N-terminal eight residues. The chain is Dual function macrocyclase-peptidase POPB from Galerina marginata (strain CBS 339.88).